Consider the following 149-residue polypeptide: Flavodoxin YqcA (149 aa).

One can recognise a Flavodoxin-like domain in the interval 4 to 145 (IGIFVGTMYG…ESNPWVEQWG (142 aa)). FMN is bound by residues 10 to 15 (TMYGNS) and 99 to 101 (NFC).

Belongs to the flavodoxin family. MioC subfamily. Monomer. Requires FMN as cofactor.

Probable electron transporter. The protein is Flavodoxin YqcA (yqcA) of Escherichia coli (strain K12).